The following is a 92-amino-acid chain: uncharacterized protein (92 aa).

This is an uncharacterized protein from Archaeoglobus fulgidus (strain ATCC 49558 / DSM 4304 / JCM 9628 / NBRC 100126 / VC-16).